The primary structure comprises 267 residues: Eukaryotic translation initiation factor 3 subunit J (267 aa).

Disordered regions lie at residues 1 to 128 (MAPS…DIDL) and 220 to 241 (KMRE…KTKV). Residues 28-46 (DEEEEDVLDSWDAAEDSEV) show a composition bias toward acidic residues. Residues 44-96 (SEVEREKAAKAAAAAAKAEAEAAAKKKSKAQRIEEHKQERKKQAEANESDEDS) are a coiled coil. A compositionally biased stretch (basic and acidic residues) spans 74–88 (QRIEEHKQERKKQAE). The segment covering 90–100 (NESDEDSDEDE) has biased composition (acidic residues). Basic and acidic residues-rich tracts occupy residues 108–121 (RRTE…HAQD) and 220–231 (KMREERAADKGN).

It belongs to the eIF-3 subunit J family. Component of the eukaryotic translation initiation factor 3 (eIF-3) complex.

It localises to the cytoplasm. In terms of biological role, component of the eukaryotic translation initiation factor 3 (eIF-3) complex, which is involved in protein synthesis of a specialized repertoire of mRNAs and, together with other initiation factors, stimulates binding of mRNA and methionyl-tRNAi to the 40S ribosome. The eIF-3 complex specifically targets and initiates translation of a subset of mRNAs involved in cell proliferation. The sequence is that of Eukaryotic translation initiation factor 3 subunit J (hcr1) from Neosartorya fischeri (strain ATCC 1020 / DSM 3700 / CBS 544.65 / FGSC A1164 / JCM 1740 / NRRL 181 / WB 181) (Aspergillus fischerianus).